Consider the following 376-residue polypeptide: Heat-inducible transcription repressor HrcA (376 aa).

Belongs to the HrcA family.

Its function is as follows. Negative regulator of class I heat shock genes (grpE-dnaK-dnaJ and groELS operons). Prevents heat-shock induction of these operons. The sequence is that of Heat-inducible transcription repressor HrcA from Chloroflexus aggregans (strain MD-66 / DSM 9485).